The primary structure comprises 171 residues: NADH-ubiquinone oxidoreductase chain 6 (171 aa).

Helical transmembrane passes span 1–21, 25–44, 49–71, 85–105, and 150–170; these read MYVMFLLSILLVLGFVSISSK, IYGGVGLIVSGAVGCGIIMG, FMGLMVFLIYLGGMLVVFGYTTA, VVIWGVVLLGVGMELFMVAWM, and WFAAIAGWSLFISVLIVIEII.

It belongs to the complex I subunit 6 family. In terms of assembly, core subunit of respiratory chain NADH dehydrogenase (Complex I) which is composed of 45 different subunits.

It is found in the mitochondrion inner membrane. It carries out the reaction a ubiquinone + NADH + 5 H(+)(in) = a ubiquinol + NAD(+) + 4 H(+)(out). Functionally, core subunit of the mitochondrial membrane respiratory chain NADH dehydrogenase (Complex I) which catalyzes electron transfer from NADH through the respiratory chain, using ubiquinone as an electron acceptor. Essential for the catalytic activity and assembly of complex I. In Lemur catta (Ring-tailed lemur), this protein is NADH-ubiquinone oxidoreductase chain 6 (MT-ND6).